A 475-amino-acid polypeptide reads, in one-letter code: MNTALAQQIANEGGVEAWMIAQQHKSLLRFLTCGSVDDGKSTLIGRLLHDTRQIYEDQLSSLHNDSKRHGTQGEKLDLALLVDGLQAEREQGITIDVAYRYFSTEKRKFIIADTPGHEQYTRNMATGASTCELAILLIDARKGVLDQTRRHSFISTLLGIKHLVVAINKMDLVDYSEETFTRIREDYLTFAGLLPGNLDIRFVPLSALEGDNVASQSESMPWYSGPTLLEVLETVEIQRVVDAQPMRFPVQYVNRPNLDFRGYAGTLASGRVEVGQRVKVLPSGVESNVARIVTFDGDREEAFAGEAITLVLTDEIDISRGDLLLAADETLPAVQSASVDVVWMAEQPLSPGQSYDIKIAGKKTRARVDGIRYQVDINNLTQREVENLPLNGIGLVDLTFDEPLVLDRYQQNPVTGGLILIDRLSNVTVGAGMVHEPVSQATAAPSQFSVFELELNALVRRHFPHWGARDLLGDK.

Residues 25–239 enclose the tr-type G domain; the sequence is KSLLRFLTCG…EVLETVEIQR (215 aa). The G1 stretch occupies residues 34–41; the sequence is GSVDDGKS. 34 to 41 lines the GTP pocket; it reads GSVDDGKS. The tract at residues 92–96 is G2; that stretch reads GITID. Residues 113–116 are G3; that stretch reads DTPG. GTP contacts are provided by residues 113–117 and 168–171; these read DTPGH and NKMD. Residues 168 to 171 form a G4 region; sequence NKMD. A G5 region spans residues 206-208; the sequence is SAL.

It belongs to the TRAFAC class translation factor GTPase superfamily. Classic translation factor GTPase family. CysN/NodQ subfamily. In terms of assembly, heterodimer composed of CysD, the smaller subunit, and CysN.

The enzyme catalyses sulfate + ATP + H(+) = adenosine 5'-phosphosulfate + diphosphate. It functions in the pathway sulfur metabolism; hydrogen sulfide biosynthesis; sulfite from sulfate: step 1/3. With CysD forms the ATP sulfurylase (ATPS) that catalyzes the adenylation of sulfate producing adenosine 5'-phosphosulfate (APS) and diphosphate, the first enzymatic step in sulfur assimilation pathway. APS synthesis involves the formation of a high-energy phosphoric-sulfuric acid anhydride bond driven by GTP hydrolysis by CysN coupled to ATP hydrolysis by CysD. The polypeptide is Sulfate adenylyltransferase subunit 1 (Escherichia coli O127:H6 (strain E2348/69 / EPEC)).